A 155-amino-acid polypeptide reads, in one-letter code: Small ribosomal subunit protein uS17 (155 aa).

An N-acetylalanine modification is found at alanine 2.

The protein belongs to the universal ribosomal protein uS17 family.

The chain is Small ribosomal subunit protein uS17 from Drosophila yakuba (Fruit fly).